The primary structure comprises 353 residues: B1 bradykinin receptor (353 aa).

Over 1 to 41 the chain is Extracellular; the sequence is MASQTLVVFQASNQSQLPPPNATLCDGAQEAWHLLHKVLPT. N13 and N21 each carry an N-linked (GlcNAc...) asparagine glycan. The helical transmembrane segment at 42-62 threads the bilayer; it reads CVVAICSGGLLGNLFVLSVFL. The Cytoplasmic segment spans residues 63–72; it reads VPRRRLNAAE. The helical transmembrane segment at 73 to 93 threads the bilayer; that stretch reads IYLAHLAASDLVFALGLPFWA. Residues 94–110 are Extracellular-facing; that stretch reads ETIRNGFHWPFGAPLCR. Cysteines 109 and 189 form a disulfide. The chain crosses the membrane as a helical span at residues 111–131; the sequence is VVNGVIKANLFISIFLVVAIS. Residues 132 to 154 lie on the Cytoplasmic side of the membrane; that stretch reads RDRYRALVHPVASWRRRRRRHWA. The chain crosses the membrane as a helical span at residues 155 to 175; the sequence is QATCVLIWTAGGLLSIPTFLL. The Extracellular segment spans residues 176–207; sequence RSVQVVPELNVSACVLPFPHEAWAFVRTVELN. N185 is a glycosylation site (N-linked (GlcNAc...) asparagine). A helical membrane pass occupies residues 208-228; it reads VLGFLLPLAAILFFNYHILAA. Over 229–251 the chain is Cytoplasmic; it reads LRGREQLSRTRCGGPRDGKTTAL. The chain crosses the membrane as a helical span at residues 252 to 272; it reads ILTLVAVFLLCWTPYHVCAFL. At 273–295 the chain is on the extracellular side; it reads EFLLHVRAIRGCFWEDFTDLGLQ. The chain crosses the membrane as a helical span at residues 296–316; it reads YTNFFAFINSCLNPVIYVFWG. At 317 to 353 the chain is on the cytoplasmic side; sequence QLFRTKIWELYHRCLPRKLTAVSSSRRKEIFQIFWRN. The S-palmitoyl cysteine moiety is linked to residue C330.

It belongs to the G-protein coupled receptor 1 family. Bradykinin receptor subfamily. BDKRB1 sub-subfamily.

Its subcellular location is the cell membrane. Its function is as follows. This is a receptor for bradykinin. Could be a factor in chronic pain and inflammation. The sequence is that of B1 bradykinin receptor (BDKRB1) from Sus scrofa (Pig).